The primary structure comprises 305 residues: ATP synthase F(0) complex subunit B2, mitochondrial (305 aa).

A mitochondrion-targeting transit peptide spans 1–22; that stretch reads MSLSRCLPLGQNARVIIIPARL.

This sequence belongs to the eukaryotic ATPase B chain family. In terms of assembly, subunit of the F-type ATPase which has 2 components, CF(1) - the catalytic core - and CF(0) - the membrane proton channel.

It localises to the mitochondrion. The protein localises to the mitochondrion inner membrane. In terms of biological role, mitochondrial membrane ATP synthase (F(1)F(0) ATP synthase or Complex V) produces ATP from ADP in the presence of a proton gradient across the membrane which is generated by electron transport complexes of the respiratory chain. F-type ATPases consist of two structural domains, F(1) - containing the extramembraneous catalytic core, and F(0) - containing the membrane proton channel, linked together by a central stalk and a peripheral stalk. During catalysis, ATP synthesis in the catalytic domain of F(1) is coupled via a rotary mechanism of the central stalk subunits to proton translocation. Part of the complex F(0) domain and the peripheric stalk, which acts as a stator to hold the subunits of the catalytic subcomplexes relative to the rotary elements. Plays a role in somatic development. Does not play a role in germline development. The chain is ATP synthase F(0) complex subunit B2, mitochondrial from Caenorhabditis elegans.